Consider the following 246-residue polypeptide: 23S rRNA (guanosine-2'-O-)-methyltransferase RlmB (246 aa).

S-adenosyl-L-methionine is bound by residues Gly196, Ile216, and Leu225.

This sequence belongs to the class IV-like SAM-binding methyltransferase superfamily. RNA methyltransferase TrmH family. RlmB subfamily. As to quaternary structure, homodimer.

It is found in the cytoplasm. The enzyme catalyses guanosine(2251) in 23S rRNA + S-adenosyl-L-methionine = 2'-O-methylguanosine(2251) in 23S rRNA + S-adenosyl-L-homocysteine + H(+). In terms of biological role, specifically methylates the ribose of guanosine 2251 in 23S rRNA. This is 23S rRNA (guanosine-2'-O-)-methyltransferase RlmB from Yersinia pestis.